The primary structure comprises 463 residues: Ammonium transporter 1 (463 aa).

The Extracellular portion of the chain corresponds to 1 to 39; that stretch reads MVAGEIIKGVAAEITNGSSSSVVQKYLDCANQVAPDPGN. A helical transmembrane segment spans residues 40–60; the sequence is TTWVLLSTILVLGMMPALAFF. Topologically, residues 61 to 76 are cytoplasmic; sequence EAGLLRSKNTLSIITQ. The helical transmembrane segment at 77-97 threads the bilayer; the sequence is IMSGIVVLTVMWQAFGYSLTF. The Extracellular portion of the chain corresponds to 98–127; sequence GPDQKGIIGNLDHAFLINVSYDDCSPNAPN. A helical transmembrane segment spans residues 128 to 148; sequence IPAAAYAFFMMMFANITPLLM. The Cytoplasmic portion of the chain corresponds to 149-160; that stretch reads TGAFAERVKFKA. The helical transmembrane segment at 161 to 181 threads the bilayer; the sequence is FIALTVAWEIIVFYPVAHWIW. The Extracellular segment spans residues 182–194; sequence GGGWLHKYFGVLD. Residues 195 to 215 traverse the membrane as a helical segment; that stretch reads FAGGIVIHTSAGVSALVIALY. Topologically, residues 216-233 are cytoplasmic; the sequence is VGRRKDFEKYGGEFPPSN. A helical transmembrane segment spans residues 234–254; that stretch reads LPLATIGAALLWMGWFGFNAG. Residues 255–265 are Extracellular-facing; it reads SALAAGNIATS. Residues 266-286 traverse the membrane as a helical segment; that stretch reads AVASTQIGGSFSAIVWIILSA. Residues 287 to 293 are Cytoplasmic-facing; sequence AKGKPNT. A helical transmembrane segment spans residues 294–314; sequence VSVINGVIAGLAGITPASGYI. Over 315–316 the chain is Extracellular; the sequence is NS. The chain crosses the membrane as a helical span at residues 317-337; sequence QYSIGLGICLGLASYYSVVLL. The Cytoplasmic portion of the chain corresponds to 338-351; sequence KHKLHIDDALDVSS. Residues 352–372 form a helical membrane-spanning segment; that stretch reads VHGLTGIIGSLAIGFCAELSV. Over 373 to 392 the chain is Extracellular; the sequence is NPNGANGAFYGNPKLIGTQL. Residues 393–413 traverse the membrane as a helical segment; that stretch reads LGVVSVAVWAAAWTWVLLKII. The Cytoplasmic portion of the chain corresponds to 414–463; sequence DATIGVKIDESEEELGLDLVEHGEFAYHNISLQGNENHYSSVINSHDFFK.

The protein belongs to the ammonia transporter channel (TC 1.A.11.2) family.

It is found in the cell membrane. It localises to the endosome membrane. The protein localises to the lysosome membrane. Its subcellular location is the cytoplasmic vesicle. The protein resides in the phagosome membrane. Ammonium transporter that mediates the excretion of ammonium. Controls ammonium homeostasis during growth and development. Ammonium has been shown to function as a morphogen at multiple steps during the development. In Dictyostelium discoideum (Social amoeba), this protein is Ammonium transporter 1 (amtA).